The primary structure comprises 705 residues: Elongation factor G (705 aa).

The tr-type G domain occupies 7-287 (HLTRNIGIMA…YVCAFLPSPL (281 aa)). GTP contacts are provided by residues 16-23 (AHIDAGKT), 84-88 (DTPGH), and 138-141 (NKMD). The segment at 291–312 (NVVGTNPDTGAEEDRKPSEDDK) is disordered. Residues 302 to 312 (EEDRKPSEDDK) show a composition bias toward basic and acidic residues.

This sequence belongs to the TRAFAC class translation factor GTPase superfamily. Classic translation factor GTPase family. EF-G/EF-2 subfamily.

The protein resides in the cytoplasm. Functionally, catalyzes the GTP-dependent ribosomal translocation step during translation elongation. During this step, the ribosome changes from the pre-translocational (PRE) to the post-translocational (POST) state as the newly formed A-site-bound peptidyl-tRNA and P-site-bound deacylated tRNA move to the P and E sites, respectively. Catalyzes the coordinated movement of the two tRNA molecules, the mRNA and conformational changes in the ribosome. In Bacteroides fragilis (strain ATCC 25285 / DSM 2151 / CCUG 4856 / JCM 11019 / LMG 10263 / NCTC 9343 / Onslow / VPI 2553 / EN-2), this protein is Elongation factor G.